The primary structure comprises 99 residues: Indole-3-acetic acid-induced protein ARG2 (99 aa).

The tract at residues 40–62 is disordered; sequence RGGASIGGNMVPKSGEEKVRGGE. Over residues 53–62 the composition is skewed to basic and acidic residues; that stretch reads SGEEKVRGGE.

This is Indole-3-acetic acid-induced protein ARG2 (ARG2) from Vigna radiata var. radiata (Mung bean).